The following is a 450-amino-acid chain: Chromosomal replication initiator protein DnaA (450 aa).

Positions 1–84 (MTENEQIFWN…AVDYVYEDNL (84 aa)) are domain I, interacts with DnaA modulators. Residues 84-109 (LMIEQQHQGQQGYTEQAFQQLPAVQS) are domain II. The tract at residues 110 to 328 (DLNPKYSFDN…GALKDISLVA (219 aa)) is domain III, AAA+ region. ATP contacts are provided by glycine 154, glycine 156, lysine 157, and threonine 158. Residues 329–450 (NFKQIDTITV…EIETIKNKIK (122 aa)) form a domain IV, binds dsDNA region.

It belongs to the DnaA family. Oligomerizes as a right-handed, spiral filament on DNA at oriC.

The protein localises to the cytoplasm. Its function is as follows. Plays an essential role in the initiation and regulation of chromosomal replication. ATP-DnaA binds to the origin of replication (oriC) to initiate formation of the DNA replication initiation complex once per cell cycle. Binds the DnaA box (a 9 base pair repeat at the origin) and separates the double-stranded (ds)DNA. Forms a right-handed helical filament on oriC DNA; dsDNA binds to the exterior of the filament while single-stranded (ss)DNA is stabiized in the filament's interior. The ATP-DnaA-oriC complex binds and stabilizes one strand of the AT-rich DNA unwinding element (DUE), permitting loading of DNA polymerase. After initiation quickly degrades to an ADP-DnaA complex that is not apt for DNA replication. Binds acidic phospholipids. The chain is Chromosomal replication initiator protein DnaA from Streptococcus equi subsp. zooepidemicus (strain H70).